A 146-amino-acid chain; its full sequence is Large ribosomal subunit protein uL15 (146 aa).

The disordered stretch occupies residues 1-54; the sequence is MTLRLNELAPAEGAKREHRRLGRGIGSGVGKTGGRGIKGQKSRKSGGVRPGFEG. Residues 23–37 are compositionally biased toward gly residues; that stretch reads RGIGSGVGKTGGRGI.

Belongs to the universal ribosomal protein uL15 family. In terms of assembly, part of the 50S ribosomal subunit.

Binds to the 23S rRNA. The protein is Large ribosomal subunit protein uL15 of Acinetobacter baumannii (strain SDF).